A 402-amino-acid chain; its full sequence is Bone morphogenetic protein 8A (402 aa).

A signal peptide spans 1–19 (MAARPGPLWLLGLTLCALG). Positions 20 to 263 (GGGPGLRPPP…ASPSPIRTPR (244 aa)) are excised as a propeptide. 2 N-linked (GlcNAc...) asparagine glycosylation sites follow: asparagine 158 and asparagine 343. 3 disulfides stabilise this stretch: cysteine 301/cysteine 367, cysteine 330/cysteine 399, and cysteine 334/cysteine 401.

It belongs to the TGF-beta family. Homodimer; disulfide-linked.

It is found in the secreted. Its function is as follows. Induces cartilage and bone formation. May be the osteoinductive factor responsible for the phenomenon of epithelial osteogenesis. Plays a role in calcium regulation and bone homeostasis. Signaling protein involved in regulation of thermogenesis and energy balance. Proposed to increase the peripheral response of brown adipose tissue (BAT) to adrenergic stimulation while acting centrally in the hypothalamus to increase sympathetic output to BAT. Functionally, growth factor of the TGF-beta superfamily that plays important role in various biological processes, including spermatogenesis, osteogenesis, steroidogenesis as well as regulation of energy balance. Initiates the canonical BMP signaling cascade by associating with type I receptor BMPR1A and type II receptor BMPR2. Once all three components are bound together in a complex at the cell surface, BMPR2 phosphorylates and activates BMPR1A. In turn, BMPR1A propagates signal by phosphorylating SMAD1/5/8 that travel to the nucleus and act as activators and repressors of transcription of target genes. In addition, activates the SMAD2/3 pathway. The sequence is that of Bone morphogenetic protein 8A (BMP8A) from Homo sapiens (Human).